The following is a 1328-amino-acid chain: Protein turtle homolog B (1328 aa).

The signal sequence occupies residues 1–17 (MIWYVATLIASVISTRG). Residues 18–722 (LVAQGAHGLR…DLTDDGLARP (705 aa)) lie on the Extracellular side of the membrane. Ig-like domains are found at residues 30-115 (PEFV…ECKV), 139-226 (PTFT…LLVQ), 228-320 (PPFI…AYLT), 324-415 (PARV…ARLV), and 420-504 (PYFT…THLT). 2 cysteine pairs are disulfide-bonded: cysteine 45/cysteine 113 and cysteine 161/cysteine 208. Asparagine 241 and asparagine 258 each carry an N-linked (GlcNAc...) asparagine glycan. 3 cysteine pairs are disulfide-bonded: cysteine 250/cysteine 303, cysteine 346/cysteine 397, and cysteine 442/cysteine 488. Fibronectin type-III domains lie at 512–604 (APGS…TLAF) and 614–708 (LVTP…STDI). Asparagine 624 carries an N-linked (GlcNAc...) asparagine glycan. A helical transmembrane segment spans residues 723-743 (VLAGIVATICFLAAAILFSTL). The Cytoplasmic segment spans residues 744–1328 (AACFVNKQRK…EPPTTLPTSG (585 aa)). Disordered stretches follow at residues 758 to 817 (RKKD…EKEL), 914 to 1040 (PMSS…PEPW), and 1106 to 1328 (KSPG…PTSG). Serine 775, serine 783, and serine 794 each carry phosphoserine. The span at 990–1001 (SPLSSVMSSPPL) shows a compositional bias: low complexity. Polar residues-rich tracts occupy residues 1018–1033 (ENASNSTLPLTQTPTG), 1129–1141 (LVSQGQLRHTSQG), and 1199–1214 (SRLSPLTQSPLSSRTG). Position 1136 is an omega-N-methylarginine (arginine 1136). Residues serine 1207 and serine 1215 each carry the phosphoserine modification. A compositionally biased stretch (low complexity) spans 1246–1273 (SFSRKSTPSSTGSPSQSSRSGSPSYRPT). Pro residues-rich tracts occupy residues 1284–1295 (PSPPPGPAPPAP) and 1318–1328 (PEPPTTLPTSG).

It belongs to the immunoglobulin superfamily. Turtle family. Found in a complex with MAGI2 and NLGN2, where it interacts with MAGI2 (via PDZ 5 and PDZ 6 domains). Post-translationally, N-glycosylated and sialylated. Not significantly O-glycosylated. Detected in brain.

The protein resides in the cell membrane. It is found in the postsynaptic cell membrane. The protein localises to the postsynaptic density. Transmembrane protein which is abundantly expressed in interneurons, where it may regulate inhibitory synapse development. May mediate homophilic cell adhesion. The sequence is that of Protein turtle homolog B from Mus musculus (Mouse).